The chain runs to 375 residues: Probable pectin lyase B (375 aa).

A signal peptide spans 1–19 (MKYAAFLPTIGALVSQAIA). Intrachain disulfides connect Cys-82–Cys-101 and Cys-91–Cys-225. An N-linked (GlcNAc...) asparagine glycan is attached at Asn-128. Residue Arg-255 is part of the active site. A disulfide bridge links Cys-321 with Cys-329.

Belongs to the polysaccharide lyase 1 family.

The protein resides in the secreted. The enzyme catalyses Eliminative cleavage of (1-&gt;4)-alpha-D-galacturonan methyl ester to give oligosaccharides with 4-deoxy-6-O-methyl-alpha-D-galact-4-enuronosyl groups at their non-reducing ends.. Its function is as follows. Pectinolytic enzymes consist of four classes of enzymes: pectin lyase, polygalacturonase, pectin methylesterase and rhamnogalacturonase. Among pectinolytic enzymes, pectin lyase is the most important in depolymerization of pectin, since it cleaves internal glycosidic bonds of highly methylated pectins. This Aspergillus fumigatus (strain CBS 144.89 / FGSC A1163 / CEA10) (Neosartorya fumigata) protein is Probable pectin lyase B (pelB).